Here is a 188-residue protein sequence, read N- to C-terminus: Crossover junction endodeoxyribonuclease RuvC (188 aa).

Residues Asp7, Glu68, and Asp141 contribute to the active site. The Mg(2+) site is built by Asp7, Glu68, and Asp141.

The protein belongs to the RuvC family. In terms of assembly, homodimer which binds Holliday junction (HJ) DNA. The HJ becomes 2-fold symmetrical on binding to RuvC with unstacked arms; it has a different conformation from HJ DNA in complex with RuvA. In the full resolvosome a probable DNA-RuvA(4)-RuvB(12)-RuvC(2) complex forms which resolves the HJ. Requires Mg(2+) as cofactor.

Its subcellular location is the cytoplasm. The enzyme catalyses Endonucleolytic cleavage at a junction such as a reciprocal single-stranded crossover between two homologous DNA duplexes (Holliday junction).. In terms of biological role, the RuvA-RuvB-RuvC complex processes Holliday junction (HJ) DNA during genetic recombination and DNA repair. Endonuclease that resolves HJ intermediates. Cleaves cruciform DNA by making single-stranded nicks across the HJ at symmetrical positions within the homologous arms, yielding a 5'-phosphate and a 3'-hydroxyl group; requires a central core of homology in the junction. The consensus cleavage sequence is 5'-(A/T)TT(C/G)-3'. Cleavage occurs on the 3'-side of the TT dinucleotide at the point of strand exchange. HJ branch migration catalyzed by RuvA-RuvB allows RuvC to scan DNA until it finds its consensus sequence, where it cleaves and resolves the cruciform DNA. The polypeptide is Crossover junction endodeoxyribonuclease RuvC (Mycobacterium avium (strain 104)).